A 269-amino-acid polypeptide reads, in one-letter code: Undecaprenyl-diphosphatase (269 aa).

7 consecutive transmembrane segments (helical) span residues 41–61, 78–98, 107–127, 148–167, 184–204, 213–233, and 248–268; these read FATM…VFHY, GFNL…IGLL, LFSP…MIVI, SLLI…SRSA, AEFS…LSLL, LEWQ…LFVV, and FAYY…EKIV.

This sequence belongs to the UppP family.

It localises to the cell membrane. It catalyses the reaction di-trans,octa-cis-undecaprenyl diphosphate + H2O = di-trans,octa-cis-undecaprenyl phosphate + phosphate + H(+). In terms of biological role, catalyzes the dephosphorylation of undecaprenyl diphosphate (UPP). Confers resistance to bacitracin. This is Undecaprenyl-diphosphatase from Thermoanaerobacter pseudethanolicus (strain ATCC 33223 / 39E) (Clostridium thermohydrosulfuricum).